The primary structure comprises 412 residues: uncharacterized protein (412 aa).

H49 is a binding site for Zn(2+). The active-site Proton acceptor is E52. Residues H53 and E129 each coordinate Zn(2+).

This sequence belongs to the peptidase M16 family. Zn(2+) serves as cofactor.

This is an uncharacterized protein from Rickettsia typhi (strain ATCC VR-144 / Wilmington).